The primary structure comprises 115 residues: NADH-ubiquinone oxidoreductase chain 3 (115 aa).

3 helical membrane passes run 5–25, 55–75, and 86–106; these read TALL…FWFF, FFLV…LLPL, and IMML…AYEW.

The protein belongs to the complex I subunit 3 family. As to quaternary structure, core subunit of respiratory chain NADH dehydrogenase (Complex I) which is composed of 45 different subunits. Interacts with TMEM186. Interacts with TMEM242.

The protein resides in the mitochondrion inner membrane. It catalyses the reaction a ubiquinone + NADH + 5 H(+)(in) = a ubiquinol + NAD(+) + 4 H(+)(out). Core subunit of the mitochondrial membrane respiratory chain NADH dehydrogenase (Complex I) which catalyzes electron transfer from NADH through the respiratory chain, using ubiquinone as an electron acceptor. Essential for the catalytic activity of complex I. This chain is NADH-ubiquinone oxidoreductase chain 3, found in Peromyscus sejugis (Santa Cruz mouse).